We begin with the raw amino-acid sequence, 162 residues long: NADPH-dependent 7-cyano-7-deazaguanine reductase (162 aa).

C53 functions as the Thioimide intermediate in the catalytic mechanism. D60 functions as the Proton donor in the catalytic mechanism. Substrate-binding positions include 75–77 (VES) and 94–95 (HE).

The protein belongs to the GTP cyclohydrolase I family. QueF type 1 subfamily.

It is found in the cytoplasm. The catalysed reaction is 7-aminomethyl-7-carbaguanine + 2 NADP(+) = 7-cyano-7-deazaguanine + 2 NADPH + 3 H(+). It participates in tRNA modification; tRNA-queuosine biosynthesis. Functionally, catalyzes the NADPH-dependent reduction of 7-cyano-7-deazaguanine (preQ0) to 7-aminomethyl-7-deazaguanine (preQ1). The protein is NADPH-dependent 7-cyano-7-deazaguanine reductase of Exiguobacterium sp. (strain ATCC BAA-1283 / AT1b).